The chain runs to 375 residues: ELAV-like protein 2 (375 aa).

RRM domains lie at 67–145 (TNLI…YARP), 153–233 (ANLY…FANN), and 292–370 (WCIF…FKTS).

Belongs to the RRM elav family. In terms of assembly, part of a ribonucleoprotein (RNP) complex, at least composed of elavl1/elrA and/or elavl2/elrB, igf2bp3/vg1RBP, ddx6/Xp54, ybx2/frgy2, lsm14b/rap55b and, in a subset of RNP complexes, stau1/staufen. Binds RNA as a homooligomer.

The protein localises to the cytoplasm. The protein resides in the cell cortex. Binds to poly-U elements and AU-rich elements (AREs) in the 3'-UTR of target mRNAs. Required for the vegetal localization of vg1 mRNA. Probably required for nervous system development. The sequence is that of ELAV-like protein 2 from Xenopus tropicalis (Western clawed frog).